Reading from the N-terminus, the 352-residue chain is Holliday junction branch migration complex subunit RuvB (352 aa).

The large ATPase domain (RuvB-L) stretch occupies residues 4 to 185; that stretch reads PDRLISAVSG…FGIVQRLEFY (182 aa). ATP-binding positions include Ile24, Arg25, Gly66, Lys69, Thr70, Thr71, 132–134, Arg175, Tyr185, and Arg222; that span reads EDF. Thr70 is a binding site for Mg(2+). A small ATPAse domain (RuvB-S) region spans residues 186–256; that stretch reads NVEDLATIVS…IADKALNLLD (71 aa). The head domain (RuvB-H) stretch occupies residues 259–352; the sequence is ERGFDHLDRR…SDLFTSEDGN (94 aa). The DNA site is built by Arg295, Arg314, and Arg319.

It belongs to the RuvB family. In terms of assembly, homohexamer. Forms an RuvA(8)-RuvB(12)-Holliday junction (HJ) complex. HJ DNA is sandwiched between 2 RuvA tetramers; dsDNA enters through RuvA and exits via RuvB. An RuvB hexamer assembles on each DNA strand where it exits the tetramer. Each RuvB hexamer is contacted by two RuvA subunits (via domain III) on 2 adjacent RuvB subunits; this complex drives branch migration. In the full resolvosome a probable DNA-RuvA(4)-RuvB(12)-RuvC(2) complex forms which resolves the HJ.

The protein localises to the cytoplasm. It catalyses the reaction ATP + H2O = ADP + phosphate + H(+). Its function is as follows. The RuvA-RuvB-RuvC complex processes Holliday junction (HJ) DNA during genetic recombination and DNA repair, while the RuvA-RuvB complex plays an important role in the rescue of blocked DNA replication forks via replication fork reversal (RFR). RuvA specifically binds to HJ cruciform DNA, conferring on it an open structure. The RuvB hexamer acts as an ATP-dependent pump, pulling dsDNA into and through the RuvAB complex. RuvB forms 2 homohexamers on either side of HJ DNA bound by 1 or 2 RuvA tetramers; 4 subunits per hexamer contact DNA at a time. Coordinated motions by a converter formed by DNA-disengaged RuvB subunits stimulates ATP hydrolysis and nucleotide exchange. Immobilization of the converter enables RuvB to convert the ATP-contained energy into a lever motion, pulling 2 nucleotides of DNA out of the RuvA tetramer per ATP hydrolyzed, thus driving DNA branch migration. The RuvB motors rotate together with the DNA substrate, which together with the progressing nucleotide cycle form the mechanistic basis for DNA recombination by continuous HJ branch migration. Branch migration allows RuvC to scan DNA until it finds its consensus sequence, where it cleaves and resolves cruciform DNA. This is Holliday junction branch migration complex subunit RuvB from Pseudomonas paraeruginosa (strain DSM 24068 / PA7) (Pseudomonas aeruginosa (strain PA7)).